A 78-amino-acid chain; its full sequence is Putative membrane protein insertion efficiency factor (78 aa).

The protein belongs to the UPF0161 family.

Its subcellular location is the cell membrane. Functionally, could be involved in insertion of integral membrane proteins into the membrane. The sequence is that of Putative membrane protein insertion efficiency factor from Limosilactobacillus reuteri (strain DSM 20016) (Lactobacillus reuteri).